We begin with the raw amino-acid sequence, 88 residues long: Ribonuclease P protein component 1 (88 aa).

Belongs to the eukaryotic/archaeal RNase P protein component 1 family. As to quaternary structure, consists of a catalytic RNA component and at least 4-5 protein subunits.

The protein resides in the cytoplasm. The enzyme catalyses Endonucleolytic cleavage of RNA, removing 5'-extranucleotides from tRNA precursor.. Part of ribonuclease P, a protein complex that generates mature tRNA molecules by cleaving their 5'-ends. In Nitrosopumilus maritimus (strain SCM1), this protein is Ribonuclease P protein component 1.